A 486-amino-acid chain; its full sequence is Protein nucleotidyltransferase YdiU (486 aa).

ATP is bound by residues glycine 90, glycine 92, arginine 93, lysine 113, aspartate 125, glycine 126, arginine 176, and arginine 183. The Proton acceptor role is filled by aspartate 252. Positions 253 and 262 each coordinate Mg(2+). Aspartate 262 lines the ATP pocket.

Belongs to the SELO family. Mg(2+) is required as a cofactor. The cofactor is Mn(2+).

It catalyses the reaction L-seryl-[protein] + ATP = 3-O-(5'-adenylyl)-L-seryl-[protein] + diphosphate. It carries out the reaction L-threonyl-[protein] + ATP = 3-O-(5'-adenylyl)-L-threonyl-[protein] + diphosphate. The enzyme catalyses L-tyrosyl-[protein] + ATP = O-(5'-adenylyl)-L-tyrosyl-[protein] + diphosphate. The catalysed reaction is L-histidyl-[protein] + UTP = N(tele)-(5'-uridylyl)-L-histidyl-[protein] + diphosphate. It catalyses the reaction L-seryl-[protein] + UTP = O-(5'-uridylyl)-L-seryl-[protein] + diphosphate. It carries out the reaction L-tyrosyl-[protein] + UTP = O-(5'-uridylyl)-L-tyrosyl-[protein] + diphosphate. Nucleotidyltransferase involved in the post-translational modification of proteins. It can catalyze the addition of adenosine monophosphate (AMP) or uridine monophosphate (UMP) to a protein, resulting in modifications known as AMPylation and UMPylation. The polypeptide is Protein nucleotidyltransferase YdiU (Pseudomonas putida (strain ATCC 47054 / DSM 6125 / CFBP 8728 / NCIMB 11950 / KT2440)).